Here is a 366-residue protein sequence, read N- to C-terminus: Alanine racemase (366 aa).

Residue lysine 40 is the Proton acceptor; specific for D-alanine of the active site. Lysine 40 is subject to N6-(pyridoxal phosphate)lysine. A substrate-binding site is contributed by arginine 136. The active-site Proton acceptor; specific for L-alanine is the tyrosine 263. Substrate is bound at residue methionine 310.

Belongs to the alanine racemase family. The cofactor is pyridoxal 5'-phosphate.

The catalysed reaction is L-alanine = D-alanine. The protein operates within amino-acid biosynthesis; D-alanine biosynthesis; D-alanine from L-alanine: step 1/1. Functionally, catalyzes the interconversion of L-alanine and D-alanine. May also act on other amino acids. The sequence is that of Alanine racemase (alr) from Streptococcus pyogenes serotype M2 (strain MGAS10270).